Here is a 105-residue protein sequence, read N- to C-terminus: Heat shock protein HspQ (105 aa).

Residues 74-105 are disordered; it reads SSETQDEHPEQPSMDELARTIRKQLQAPRLRN.

Belongs to the HspQ family.

It localises to the cytoplasm. Its function is as follows. Involved in the degradation of certain denaturated proteins, including DnaA, during heat shock stress. The sequence is that of Heat shock protein HspQ from Citrobacter koseri (strain ATCC BAA-895 / CDC 4225-83 / SGSC4696).